Here is a 212-residue protein sequence, read N- to C-terminus: 3-isopropylmalate dehydratase small subunit (212 aa).

The protein belongs to the LeuD family. LeuD type 1 subfamily. As to quaternary structure, heterodimer of LeuC and LeuD.

The catalysed reaction is (2R,3S)-3-isopropylmalate = (2S)-2-isopropylmalate. The protein operates within amino-acid biosynthesis; L-leucine biosynthesis; L-leucine from 3-methyl-2-oxobutanoate: step 2/4. Catalyzes the isomerization between 2-isopropylmalate and 3-isopropylmalate, via the formation of 2-isopropylmaleate. The protein is 3-isopropylmalate dehydratase small subunit of Methylococcus capsulatus (strain ATCC 33009 / NCIMB 11132 / Bath).